The sequence spans 202 residues: Nascent polypeptide-associated complex subunit alpha (202 aa).

The segment covering 1-19 has biased composition (basic and acidic residues); it reads MADPRVEEIVEEETPKQTV. The segment at 1 to 41 is disordered; sequence MADPRVEEIVEEETPKQTVEDAGSDSESEAGEANIPAGAAV. The NAC-A/B domain maps to 45 to 110; the sequence is SRNEKKARKA…AKIEDLNSQA (66 aa). The span at 117-127 shows a compositional bias: low complexity; sequence QLAAAEAAAGE. The segment at 117-165 is disordered; that stretch reads QLAAAEAAAGEHAGHDHEHDLGTKVPEAETKKEEEEDDGEPVDESGLEA. A compositionally biased stretch (basic and acidic residues) spans 128 to 149; that stretch reads HAGHDHEHDLGTKVPEAETKKE. The span at 150–162 shows a compositional bias: acidic residues; sequence EEEDDGEPVDESG. Residues 163 to 202 form the UBA domain; that stretch reads LEAKDIELVMAQANVSRKKAVKALRENDNDIVNSIMALSI.

It belongs to the NAC-alpha family. Part of the nascent polypeptide-associated complex (NAC), consisting of egd2 and egd1. NAC associates with ribosomes via egd1.

It is found in the cytoplasm. The protein resides in the nucleus. Functionally, component of the nascent polypeptide-associated complex (NAC), a dynamic component of the ribosomal exit tunnel, protecting the emerging polypeptides from interaction with other cytoplasmic proteins to ensure appropriate nascent protein targeting. The NAC complex also promotes mitochondrial protein import by enhancing productive ribosome interactions with the outer mitochondrial membrane and blocks the inappropriate interaction of ribosomes translating non-secretory nascent polypeptides with translocation sites in the membrane of the endoplasmic reticulum. Egd2 may also be involved in transcription regulation. The polypeptide is Nascent polypeptide-associated complex subunit alpha (egd2) (Aspergillus oryzae (strain ATCC 42149 / RIB 40) (Yellow koji mold)).